A 555-amino-acid polypeptide reads, in one-letter code: Transmembrane protein 87A (555 aa).

Residues 1 to 21 (MAVAAWLQVSPVIFLLLGAQP) form the signal peptide. Residues 22-225 (FPLSFLGAGP…YEYLTLEDYP (204 aa)) are Lumenal-facing. Disulfide bonds link Cys74–Cys128 and Cys89–Cys431. N-linked (GlcNAc...) asparagine glycans are attached at residues Asn79, Asn157, and Asn160. The helical transmembrane segment at 226–246 (LMIFFMVMCIVYVLFGVLWLA) threads the bilayer. Residues 247 to 257 (WSACYWRDLLR) are Cytoplasmic-facing. A helical transmembrane segment spans residues 258–278 (IQFWIGAVIFLGMFEKAVFYA). Over 279 to 305 (EFQNIRYKGESVQNALVLAELLSAVKR) the chain is Lumenal. Residues 306 to 322 (SLARTLVIIVSLGYGIV) form a helical membrane-spanning segment. Residues 323–325 (KPR) lie on the Cytoplasmic side of the membrane. The chain crosses the membrane as a helical span at residues 326 to 346 (LGVTLHKVVVAGALYLLFSGM). At 347 to 361 (EGVLRVTGAQTDLAS) the chain is on the lumenal side. A helical transmembrane segment spans residues 362–382 (LAFIPLAFLDTALCWWIFISL). Topologically, residues 383 to 403 (TQTMKLLKLRRNIVKLSLYRH) are cytoplasmic. A helical transmembrane segment spans residues 404-424 (FTNTLILAVAASIVFIIWTTM). Over 425 to 437 (KFRIVTCQSDWRE) the chain is Lumenal. A helical transmembrane segment spans residues 438–458 (LWVDDAIWRLLFSMILFVIMI). Over 459–555 (LWRPSANNQR…ITHFERSKME (97 aa)) the chain is Cytoplasmic. Residues 491 to 515 (SFEGMKMRSTKQEPNGTSKVNKAQE) form a disordered region. Residues 502–511 (QEPNGTSKVN) are compositionally biased toward polar residues. Ser540 carries the post-translational modification Phosphoserine.

This sequence belongs to the LU7TM family. TMEM87 subfamily. As to quaternary structure, may interact with STOML3; STOML3 potentiates the mechanosensitive ion channel activity associated with TMEM87A. In terms of tissue distribution, highly expressed in sensory neurons responsive to mechanical force.

The protein resides in the cell membrane. The protein localises to the golgi apparatus membrane. It is found in the cell projection. It localises to the ruffle. In terms of biological role, potential monoatomic ion channel gated by mechanical force, implicated in normal touch sensitivity through the generation of mechanically activated currents. However, a direct channel activity is debated and an alternative could be that it functions as a chaperone for an unidentified mechanosensitive ion channel. Could also be involved in cell mechanosensitivity regulating cell adhesion and migration. May also be involved in retrograde transport from endosomes to the trans-Golgi network (TGN). The protein is Transmembrane protein 87A of Mus musculus (Mouse).